Reading from the N-terminus, the 135-residue chain is Large ribosomal subunit protein uL16c (135 aa).

The protein belongs to the universal ribosomal protein uL16 family. As to quaternary structure, part of the 50S ribosomal subunit.

It is found in the plastid. The protein resides in the chloroplast. The polypeptide is Large ribosomal subunit protein uL16c (Gossypium barbadense (Sea Island cotton)).